Reading from the N-terminus, the 305-residue chain is Superkiller complex protein 8 (305 aa).

Met1 carries the N-acetylmethionine modification. The residue at position 2 (Thr2) is an N-acetylthreonine; in WD repeat-containing protein 61, N-terminally processed. WD repeat units lie at residues 14 to 57 (AHDD…LDLQ), 62 to 101 (GHQLGVVSVDISHTLPIAASSSLDAHIRLWDLENGKQIKS), 104 to 143 (AGPVDAWTLAFSPDSQYLATGTHVGKVNIFGVESGKKEYS), 146 to 187 (TRGK…HTLE), 188 to 227 (GHAMPIRSLTFSPDSQLLVTASDDGYIKIYDVQHANLAGT), 230 to 269 (GHASWVLNVAFCPDDTHFVSSSSDKSVKVWDVGTRTCVHT), and 272 to 305 (DHQDQVWGVKYNGNGSKIVSVGDDQEIHIYDCPI).

The protein belongs to the SKI8 family. In terms of assembly, component of the PAF1 complex, which consists of CDC73, PAF1, LEO1, CTR9, RTF1 and SKIC8. The PAF1 complex interacts with PHF5A. Within the PAF1 complex interacts directly with PHF5A. Component of the SKI complex which consists of SKIC2, SKIC3 and SKIC8.

It is found in the nucleus. Its subcellular location is the cytoplasm. In terms of biological role, component of the PAF1 complex (PAF1C) which has multiple functions during transcription by RNA polymerase II and is implicated in regulation of development and maintenance of embryonic stem cell pluripotency. PAF1C associates with RNA polymerase II through interaction with POLR2A CTD non-phosphorylated and 'Ser-2'- and 'Ser-5'-phosphorylated forms and is involved in transcriptional elongation, acting both independently and synergistically with TCEA1 and in cooperation with the DSIF complex and HTATSF1. PAF1C is required for transcription of Hox and Wnt target genes. PAF1C is involved in hematopoiesis and stimulates transcriptional activity of KMT2A/MLL1; it promotes leukemogenesis through association with KMT2A/MLL1-rearranged oncoproteins, such as KMT2A/MLL1-MLLT3/AF9 and KMT2A/MLL1-MLLT1/ENL. PAF1C is involved in histone modifications such as ubiquitination of histone H2B and methylation on histone H3 'Lys-4' (H3K4me3). PAF1C recruits the RNF20/40 E3 ubiquitin-protein ligase complex and the E2 enzyme UBE2A or UBE2B to chromatin which mediate monoubiquitination of 'Lys-120' of histone H2B (H2BK120ub1); UB2A/B-mediated H2B ubiquitination is proposed to be coupled to transcription. PAF1C is involved in mRNA 3' end formation probably through association with cleavage and poly(A) factors. In case of infection by influenza A strain H3N2, PAF1C associates with viral NS1 protein, thereby regulating gene transcription. Required for mono- and trimethylation on histone H3 'Lys-4' (H3K4me3), dimethylation on histone H3 'Lys-79' (H3K4me3). Required for Hox gene transcription. Also acts as a component of the SKI complex, a multiprotein complex that assists the RNA-degrading exosome during the mRNA decay and quality-control pathways. The SKI complex catalyzes mRNA extraction from 80S ribosomal complexes in the 3'-5' direction and channels mRNA to the cytosolic exosome for degradation. SKI-mediated extraction of mRNA from stalled ribosomes allow binding of the Pelota-HBS1L complex and subsequent ribosome disassembly by ABCE1 for ribosome recycling. The sequence is that of Superkiller complex protein 8 from Homo sapiens (Human).